The primary structure comprises 361 residues: Single-stranded DNA-binding protein 3 (361 aa).

Methionine 1 bears the N-acetylmethionine mark. Residues 16-48 (AREKLALYVYEYLLHVGAQKSAQTFLSEIRWEK) form the LisH domain. 3 positions are modified to asymmetric dimethylarginine: arginine 128, arginine 134, and arginine 138. Disordered stretches follow at residues 140 to 166 (GNQPPGGVPGTQPLMPNSMDPTRQQGH) and 184 to 361 (PMGP…TMSV). Residues 223–241 (PNSANSIPYSSSSPGTYVG) are compositionally biased toward low complexity. The segment covering 245-255 (GGGPPGTPIMP) has biased composition (pro residues). Residues 258–269 (ADSTNSSDNIYT) show a composition bias toward polar residues. Over residues 288–298 (GSDGPMGGMGG) the composition is skewed to gly residues. Over residues 319-330 (NSPNNISGISNP) the composition is skewed to low complexity. Phosphoserine is present on residues serine 320, serine 325, and serine 328. Threonine 333 carries the post-translational modification Phosphothreonine. Positions 346-361 (HSFQNDNYSPSMTMSV) are enriched in polar residues. Phosphoserine is present on residues serine 354 and serine 360.

The protein resides in the nucleus. In terms of biological role, may be involved in transcription regulation of the alpha 2(I) collagen gene where it binds to the single-stranded polypyrimidine sequences in the promoter region. This Rattus norvegicus (Rat) protein is Single-stranded DNA-binding protein 3 (Ssbp3).